The sequence spans 333 residues: UPF0284 protein VNG_1572C (333 aa).

Belongs to the UPF0284 family.

In Halobacterium salinarum (strain ATCC 700922 / JCM 11081 / NRC-1) (Halobacterium halobium), this protein is UPF0284 protein VNG_1572C.